Consider the following 376-residue polypeptide: D-alanine--D-alanine ligase B (376 aa).

Positions 155–361 (KRLMRDAGLP…QTDLMDKLIA (207 aa)) constitute an ATP-grasp domain. 184–239 (AALGTPDLFVKPANLGSSVGVSRARSEEEFAASCALAFRYDRKILVEQALNGAREI) serves as a coordination point for ATP. Mg(2+) contacts are provided by D316, E328, and N330.

This sequence belongs to the D-alanine--D-alanine ligase family. Mg(2+) is required as a cofactor. Mn(2+) serves as cofactor.

The protein resides in the cytoplasm. It carries out the reaction 2 D-alanine + ATP = D-alanyl-D-alanine + ADP + phosphate + H(+). It functions in the pathway cell wall biogenesis; peptidoglycan biosynthesis. Its function is as follows. Cell wall formation. The sequence is that of D-alanine--D-alanine ligase B from Bradyrhizobium diazoefficiens (strain JCM 10833 / BCRC 13528 / IAM 13628 / NBRC 14792 / USDA 110).